The chain runs to 958 residues: N-terminal acetyltransferase B complex subunit NAA25 homolog (958 aa).

TPR repeat units follow at residues 7 to 42 (AVLE…HPNT), 78 to 111 (ELTL…DPSE), and 320 to 353 (FFAY…MLEY).

It belongs to the MDM20/NAA25 family. As to quaternary structure, component of the N-terminal acetyltransferase B (NatB) complex. Interacts with acer-1. As to expression, expressed in germline and somatic cells.

Its subcellular location is the cytoplasm. It is found in the nucleus. The protein localises to the chromosome. Non-catalytic subunit of the NatB complex which catalyzes acetylation of the N-terminal methionine residues of proteins beginning with Met-Asp or Met-Glu. Required for chromosome organization and arrangement; specifically for assembly of the central region components of the synaptonemal complex onto chromosomes during meiosis and for DNA double stranded break formation and repair. Acts downstream of xnd-1 to regulate levels of histone acetylation in germ and somatic cell nuclei by controlling acetyl-CoA production through antagonizing the acetyl-CoA hydrolase activity of acer-1. The chain is N-terminal acetyltransferase B complex subunit NAA25 homolog from Caenorhabditis elegans.